The following is a 234-amino-acid chain: Large ribosomal subunit protein uL1 (234 aa).

The protein belongs to the universal ribosomal protein uL1 family. In terms of assembly, part of the 50S ribosomal subunit.

Its function is as follows. Binds directly to 23S rRNA. The L1 stalk is quite mobile in the ribosome, and is involved in E site tRNA release. Functionally, protein L1 is also a translational repressor protein, it controls the translation of the L11 operon by binding to its mRNA. The protein is Large ribosomal subunit protein uL1 of Campylobacter fetus subsp. fetus (strain 82-40).